The sequence spans 274 residues: NH(3)-dependent NAD(+) synthetase (274 aa).

46-53 (GISGGQDS) contributes to the ATP binding site. Residue Asp52 coordinates Mg(2+). Deamido-NAD(+) is bound at residue Arg140. Thr160 is an ATP binding site. Position 165 (Glu165) interacts with Mg(2+). Lys173 and Asp180 together coordinate deamido-NAD(+). Residues Lys189 and Thr211 each coordinate ATP. Position 260 to 261 (260 to 261 (HK)) interacts with deamido-NAD(+).

The protein belongs to the NAD synthetase family. As to quaternary structure, homodimer.

The catalysed reaction is deamido-NAD(+) + NH4(+) + ATP = AMP + diphosphate + NAD(+) + H(+). Its pathway is cofactor biosynthesis; NAD(+) biosynthesis; NAD(+) from deamido-NAD(+) (ammonia route): step 1/1. Catalyzes the ATP-dependent amidation of deamido-NAD to form NAD. Uses ammonia as a nitrogen source. The sequence is that of NH(3)-dependent NAD(+) synthetase from Streptococcus pneumoniae serotype 2 (strain D39 / NCTC 7466).